Here is a 214-residue protein sequence, read N- to C-terminus: Phosphoheptose isomerase (214 aa).

The SIS domain maps to 51-209 (IASTFEDGGK…IDLVERLLGY (159 aa)). Residue 66–68 (NGG) participates in substrate binding. 2 residues coordinate Zn(2+): histidine 75 and glutamate 79. Residues glutamate 79, 110–111 (ND), 136–138 (STS), serine 141, and glutamine 189 each bind substrate. Zn(2+) is bound by residues glutamine 189 and histidine 197.

The protein belongs to the SIS family. GmhA subfamily. Requires Zn(2+) as cofactor.

The protein localises to the cytoplasm. The catalysed reaction is 2 D-sedoheptulose 7-phosphate = D-glycero-alpha-D-manno-heptose 7-phosphate + D-glycero-beta-D-manno-heptose 7-phosphate. The protein operates within carbohydrate biosynthesis; D-glycero-D-manno-heptose 7-phosphate biosynthesis; D-glycero-alpha-D-manno-heptose 7-phosphate and D-glycero-beta-D-manno-heptose 7-phosphate from sedoheptulose 7-phosphate: step 1/1. Its function is as follows. Catalyzes the isomerization of sedoheptulose 7-phosphate in D-glycero-D-manno-heptose 7-phosphate. In Chlorobium limicola (strain DSM 245 / NBRC 103803 / 6330), this protein is Phosphoheptose isomerase.